We begin with the raw amino-acid sequence, 173 residues long: SKP1-like protein 1 (173 aa).

An interaction with the F-box domain of F-box proteins region spans residues 115–173 (ILAANYLNIKGLLDLTCQTVADMIKGKTPEEIRKTFNIKNDFTPEEEEEIRRENQWAFE).

Belongs to the SKP1 family. In terms of assembly, part of a SCF (SKP1-CUL1-F-box protein) E3 ubiquitin-protein ligase complex. Interacts directly with MOF (via F-box domain). Interacts with rice black streaked dwarf virus RBSDV protein P7-2. Is able to form the SCF complex together with CUL1 and the viral P7-2 protein. Interacts with D3.

The protein resides in the nucleus. It participates in protein modification; protein ubiquitination. Functionally, involved in ubiquitination and subsequent proteasomal degradation of target proteins. Together with CUL1, a RING-box and a F-box protein, it forms a SCF E3 ubiquitin ligase complex. The functional specificity of this complex depends on the type of F-box protein. In the SCF complex, it serves as an adapter that links the F-box protein to CUL1. The protein is SKP1-like protein 1 of Oryza sativa subsp. japonica (Rice).